The following is a 206-amino-acid chain: Ribosomal RNA large subunit methyltransferase E (206 aa).

Positions 61, 63, 81, 97, and 122 each coordinate S-adenosyl-L-methionine. Lys162 serves as the catalytic Proton acceptor.

The protein belongs to the class I-like SAM-binding methyltransferase superfamily. RNA methyltransferase RlmE family.

The protein resides in the cytoplasm. The catalysed reaction is uridine(2552) in 23S rRNA + S-adenosyl-L-methionine = 2'-O-methyluridine(2552) in 23S rRNA + S-adenosyl-L-homocysteine + H(+). Its function is as follows. Specifically methylates the uridine in position 2552 of 23S rRNA at the 2'-O position of the ribose in the fully assembled 50S ribosomal subunit. This is Ribosomal RNA large subunit methyltransferase E from Neisseria gonorrhoeae (strain NCCP11945).